A 344-amino-acid polypeptide reads, in one-letter code: Golgi-associated RAB2 interactor protein 1B (344 aa).

The protein belongs to the GARIN family.

It is found in the golgi apparatus. Functionally, RAB2B effector protein required for accurate acrosome formation and normal male fertility. In complex with RAB2A/RAB2B, seems to suppress excessive vesicle trafficking during acrosome formation. The sequence is that of Golgi-associated RAB2 interactor protein 1B (Garin1b) from Rattus norvegicus (Rat).